Here is a 205-residue protein sequence, read N- to C-terminus: Putative epidermin response regulator (205 aa).

The segment at residues 103–200 (KYIKYVNDDF…ERKLGYKILI (98 aa)) is a DNA-binding region (ompR/PhoB-type).

This sequence to the C-terminus of E.coli phosphate regulon transcriptional regulatory protein PhoB.

This Staphylococcus epidermidis protein is Putative epidermin response regulator (epiQ).